Here is a 157-residue protein sequence, read N- to C-terminus: Nicotinate dehydrogenase subunit A (157 aa).

One can recognise a 2Fe-2S ferredoxin-type domain in the interval 3 to 79 (TTISLQVNGQ…GRNITTLEGL (77 aa)). Cysteine 41, cysteine 46, cysteine 49, and cysteine 61 together coordinate [2Fe-2S] cluster.

The cofactor is [2Fe-2S] cluster.

It catalyses the reaction 2 Fe(III)-[cytochrome] + nicotinate + H2O = 2 Fe(II)-[cytochrome] + 6-hydroxynicotinate + 2 H(+). Its pathway is cofactor degradation; nicotinate degradation. Its function is as follows. Subunit of the two-component enzyme NicAB that mediates nicotinate hydroxylation, the first step in the aerobic nicotinate degradation pathway. Mediates conversion of nicotinate into 6-hydroxynicotinate (6HNA). This is Nicotinate dehydrogenase subunit A (nicA) from Pseudomonas putida (strain ATCC 47054 / DSM 6125 / CFBP 8728 / NCIMB 11950 / KT2440).